We begin with the raw amino-acid sequence, 235 residues long: Orotidine 5'-phosphate decarboxylase (235 aa).

Residues aspartate 10, lysine 32, 59 to 68, threonine 123, arginine 184, glutamine 193, glycine 213, and arginine 214 each bind substrate; that span reads DLKLHDIPNT. The Proton donor role is filled by lysine 61.

This sequence belongs to the OMP decarboxylase family. Type 1 subfamily. In terms of assembly, homodimer.

It carries out the reaction orotidine 5'-phosphate + H(+) = UMP + CO2. Its pathway is pyrimidine metabolism; UMP biosynthesis via de novo pathway; UMP from orotate: step 2/2. Its function is as follows. Catalyzes the decarboxylation of orotidine 5'-monophosphate (OMP) to uridine 5'-monophosphate (UMP). The sequence is that of Orotidine 5'-phosphate decarboxylase from Paramagnetospirillum magneticum (strain ATCC 700264 / AMB-1) (Magnetospirillum magneticum).